Reading from the N-terminus, the 175-residue chain is uncharacterized protein (175 aa).

This is an uncharacterized protein from Human cytomegalovirus (strain AD169) (HHV-5).